Here is a 398-residue protein sequence, read N- to C-terminus: MIIKPRVRGFICVTTHPAGCEANVKQQIDYVEAKGPVVNGPKKVLVIGSSTGYGLAARITAAFGSGADTLGVFFERPGSESKPGTAGWYNSAAFEKFAHEKGLYARSINGDAFSDEVKRLTIETIKRDLGKVDLVVYSLAAPRRTHPKSGEVFSSTLKPIGKSVSFRGLDTDKEVIKDVVLEAASDQEVADTVAVMGGEDWQMWIDALLEADVLADGAKTTAFTYLGEKITHDIYWNGSIGAAKKDLDQKVLGIRDKLAPLGGDARVSVLKAVVTQASSAIPMMPLYLSLLFKVMKEQGTHEGCIEQVDGLYRESLYGAEPRLDEEGRLRADYKELQPEVQSRVEELWDKVTNENLYELTDFAGYKSEFLNLFGFEVAGVDYEQDVNPDVQIANLIQA.

NAD(+)-binding positions include 48–53 (GSSTGY), 74–75 (FE), 111–112 (DA), and 139–140 (LA). Residue Tyr-225 participates in substrate binding. The active-site Proton donor is Tyr-235. Residues Lys-244 and 273–275 (VVT) contribute to the NAD(+) site.

Belongs to the TER reductase family. As to quaternary structure, monomer.

The catalysed reaction is a 2,3-saturated acyl-[ACP] + NAD(+) = a (2E)-enoyl-[ACP] + NADH + H(+). Its pathway is lipid metabolism; fatty acid biosynthesis. Involved in the final reduction of the elongation cycle of fatty acid synthesis (FAS II). Catalyzes the reduction of a carbon-carbon double bond in an enoyl moiety that is covalently linked to an acyl carrier protein (ACP). In Pseudomonas aeruginosa (strain UCBPP-PA14), this protein is Enoyl-[acyl-carrier-protein] reductase [NADH].